Consider the following 511-residue polypeptide: GMP synthase [glutamine-hydrolyzing] (511 aa).

A Glutamine amidotransferase type-1 domain is found at D5–V195. C82 acts as the Nucleophile in catalysis. Residues H169 and E171 contribute to the active site. Residues W196–R386 form the GMPS ATP-PPase domain. S223–S229 serves as a coordination point for ATP.

In terms of assembly, homodimer.

It catalyses the reaction XMP + L-glutamine + ATP + H2O = GMP + L-glutamate + AMP + diphosphate + 2 H(+). It functions in the pathway purine metabolism; GMP biosynthesis; GMP from XMP (L-Gln route): step 1/1. Its function is as follows. Catalyzes the synthesis of GMP from XMP. This chain is GMP synthase [glutamine-hydrolyzing], found in Campylobacter jejuni subsp. jejuni serotype O:23/36 (strain 81-176).